Consider the following 195-residue polypeptide: GRF1-interacting factor 2 (195 aa).

Residues 166-195 (QQPETGLGGNVGLRGGKQDGADGQGKDDGK) are disordered. Residues 171–180 (GLGGNVGLRG) are compositionally biased toward gly residues. Residues 181 to 195 (GKQDGADGQGKDDGK) are compositionally biased toward basic and acidic residues.

It belongs to the SS18 family. As to quaternary structure, interacts with GRF1. In terms of tissue distribution, predominantly expressed in shoot tips containing the shoot apical meristem (SAM) and flower buds. Also expressed in mature flowers.

In terms of biological role, transcription coactivator that plays a role in the regulation of cell expansion in leaf and cotyledons tissues. Component of a network formed by miR396, the GRFs and their interacting factors (GIFs) acting in the regulation of meristem function, at least partially through the control of cell proliferation. GIFs are involved in the positive regulation of cell proliferation of lateral organs in a functionally redundant manner. In Arabidopsis thaliana (Mouse-ear cress), this protein is GRF1-interacting factor 2 (GIF2).